The chain runs to 878 residues: MNEQYSAMRSNVSMLGKLLGDTIKEALGEHILDRVETIRKLSKSSRAGNEAHRQELLSTLQNLSNDELLPVARAFSQFLNLTNVAEQYHSISPNGEAASNPEALAQLFTRLKDKKLSTKELQNAVSQLSIELVLTAHPTEITRRTLIHKLVEVNTCLSQLDHNDLADYERNKIMRRLRQLVAQSWHTDEIRKHRPSPIDEAKWGFAVVENSLWEGVPAFLREFNEQLENSIDYSLPAEAVPVRFTSWMGGDRDGNPNVTAEITRHVLLLSRWKACDLFTRDIQVLVSELSMTECTPELRARAGGDEVQEPYREIMKQLRSQLMSSQAYLEGRLKGERVLKPHDLLVNNEQLWEPLFACYQSLQACGMSIIANGQLLDTLRRVRCFGVPLVRIDVRQESTRHTEAIAELTRYLGLGDYESWSEADKQAFLIRELNSKRPLVPLKWEPSADTQEVLETCRVIAEAPQGSIAAYVISMARTPSDVLAVHLLLKEAGCPFALPVAPLFETLDDLNNADDVMTQLLNIDWYRGFIQGKQMVMIGYSDSAKDAGVMAASWAQYRAQDALIKTCEKAGVALTLFHGRGGSIGRGGAPAHAALLSQPPGSLKGGLRVTEQGEMIRFKFGLPEVTISSLALYTGAILEANLLPPPEPKKEWRALMDDLSDTSCKMYRGYVRENPEFVPYFRAATPELELGKLPLGSRPAKRKPNGGVESLRAIPWIFAWTQNRLMLPAWLGAGAGLQEAVKAGKQDQLEAMCRDWPFFSTRIAMLEMVFAKADLWLAEYYDQRLVDKSLWPLGQQLRDQLASDIKVVLTIANDAHLMEDLPWIAESIALRNVYTDPLNVLQAELLHRSRQQEQPDARVEQALMVTIAGVAAGMRNTG.

Active-site residues include H137 and K545.

It belongs to the PEPCase type 1 family. Mg(2+) serves as cofactor.

The catalysed reaction is oxaloacetate + phosphate = phosphoenolpyruvate + hydrogencarbonate. In terms of biological role, forms oxaloacetate, a four-carbon dicarboxylic acid source for the tricarboxylic acid cycle. In Serratia proteamaculans (strain 568), this protein is Phosphoenolpyruvate carboxylase.